The sequence spans 114 residues: Probable 4-amino-4-deoxy-L-arabinose-phosphoundecaprenol flippase subunit ArnE (114 aa).

Helical transmembrane passes span 38 to 58 (LTLR…LLWL), 64 to 84 (LPLS…TLAA), and 94 to 114 (LRHW…SWHL). In terms of domain architecture, EamA spans 43 to 112 (LAIAVVSLGL…IIFGILLMSW (70 aa)).

The protein belongs to the ArnE family. Heterodimer of ArnE and ArnF.

Its subcellular location is the cell inner membrane. It participates in bacterial outer membrane biogenesis; lipopolysaccharide biosynthesis. In terms of biological role, translocates 4-amino-4-deoxy-L-arabinose-phosphoundecaprenol (alpha-L-Ara4N-phosphoundecaprenol) from the cytoplasmic to the periplasmic side of the inner membrane. The sequence is that of Probable 4-amino-4-deoxy-L-arabinose-phosphoundecaprenol flippase subunit ArnE from Yersinia pseudotuberculosis serotype O:1b (strain IP 31758).